A 1002-amino-acid chain; its full sequence is Golgin subfamily A member 2 (1002 aa).

The segment covering 1-11 (MWPQPRLPPRP) has biased composition (pro residues). Residues 1 to 84 (MWPQPRLPPR…AATLQPSDDT (84 aa)) form an interaction with p115/USO1 region. Residues 1 to 107 (MWPQPRLPPR…TSMAASQNHD (107 aa)) form a disordered region. A coiled-coil region spans residues 16–892 (ETRQSKLAAA…LELQELVLRL (877 aa)). Dimethylated arginine is present on residues Arg18, Arg30, and Arg35. A Nuclear localization signal motif is present at residues 26 to 49 (KKKLREYQQRNSPGVPTGAKKKKK). Ser37 carries the phosphoserine modification. Residues 52 to 63 (NGSNPETTTSGG) are compositionally biased toward polar residues. At Ser66 the chain carries Phosphoserine. Over residues 95–105 (ASLTSMAASQN) the composition is skewed to polar residues. Ser273, Ser438, and Ser690 each carry phosphoserine. The disordered stretch occupies residues 694-724 (HPGEGDGLDREEEEDEEEEEEEAVAVPQPMP). Positions 702–716 (DREEEEDEEEEEEEA) are enriched in acidic residues. A phosphoserine mark is found at Ser937, Ser953, and Ser981. An interaction with GORASP1/GRASP65 region spans residues 992 to 1002 (DENDEVKITVI).

Belongs to the GOLGA2 family. As to quaternary structure, homodimer, may assemble into homohexamers. Homotetramer; forms a parallel homotetramer with a flexible rod-like structure that can give rise to I- and Y-shaped conformations. Interacts with GORASP1/GRASP65. The homooligomer forms a complex with GORASP1 with a 1:1 stoichiometry. Interacts with RAB1B that has been activated by GTP-binding. Interacts with p115/USO1; interaction with p115/USO1 inhibits interaction with STX5 and/or RAB1B. Interacts with STX5. Interacts with ZFPL1. Interacts with AKAP450/AKAP9; leading to recruit AKAP450/AKAP9 to the cis-Golgi. Cleaved by caspases at the onset of apoptosis. Post-translationally, methylation by PRMT5 is required for Golgi ribbon formation. While dimethylation at Arg-30 and Arg-35 are confirmed in vivo, it is unclear whether Arg-18 is methylated in vivo. In terms of processing, phosphorylated at Ser-37 by CDK1 at the onset of mitosis, inhibiting the interaction with p115/USO1 and triggering Golgi disassembly. Phosphorylated at Ser-37 in prophase as the Golgi complex starts to break down, and remains phosphorylated during further breakdown and partitioning of the Golgi fragments in metaphase and anaphase. In telophase, GM130 is dephosphorylated by PP2A as the Golgi fragments start to reassemble.

The protein resides in the golgi apparatus. The protein localises to the cis-Golgi network membrane. It localises to the endoplasmic reticulum-Golgi intermediate compartment membrane. It is found in the cytoplasm. Its subcellular location is the cytoskeleton. The protein resides in the spindle pole. In terms of biological role, peripheral membrane component of the cis-Golgi stack that acts as a membrane skeleton that maintains the structure of the Golgi apparatus, and as a vesicle thether that facilitates vesicle fusion to the Golgi membrane. Required for normal protein transport from the endoplasmic reticulum to the Golgi apparatus and the cell membrane. Together with p115/USO1 and STX5, involved in vesicle tethering and fusion at the cis-Golgi membrane to maintain the stacked and inter-connected structure of the Golgi apparatus. Plays a central role in mitotic Golgi disassembly: phosphorylation at Ser-37 by CDK1 at the onset of mitosis inhibits the interaction with p115/USO1, preventing tethering of COPI vesicles and thereby inhibiting transport through the Golgi apparatus during mitosis. Also plays a key role in spindle pole assembly and centrosome organization. Promotes the mitotic spindle pole assembly by activating the spindle assembly factor TPX2 to nucleate microtubules around the Golgi and capture them to couple mitotic membranes to the spindle: upon phosphorylation at the onset of mitosis, GOLGA2 interacts with importin-alpha via the nuclear localization signal region, leading to recruit importin-alpha to the Golgi membranes and liberate the spindle assembly factor TPX2 from importin-alpha. TPX2 then activates AURKA kinase and stimulates local microtubule nucleation. Upon filament assembly, nascent microtubules are further captured by GOLGA2, thus linking Golgi membranes to the spindle. Regulates the meiotic spindle pole assembly, probably via the same mechanism. Also regulates the centrosome organization. Also required for the Golgi ribbon formation and glycosylation of membrane and secretory proteins. This is Golgin subfamily A member 2 (GOLGA2) from Homo sapiens (Human).